Reading from the N-terminus, the 151-residue chain is Probable flavodoxin 2 (151 aa).

The region spanning 4 to 144 (ILLVYATMSG…ELINFGRQFA (141 aa)) is the Flavodoxin-like domain. FMN-binding positions include 10-14 (TMSGN) and 88-119 (VFGS…DIVL).

This sequence belongs to the flavodoxin family. The cofactor is FMN.

Its function is as follows. Low-potential electron donor to a number of redox enzymes. The polypeptide is Probable flavodoxin 2 (ykuP) (Bacillus subtilis (strain 168)).